Consider the following 443-residue polypeptide: Threonine/serine transporter TdcC (443 aa).

The next 11 helical transmembrane spans lie at T22 to I42, A44 to F64, G97 to V117, A135 to F155, V163 to I183, I207 to I227, A259 to S279, A319 to L339, L366 to L386, I389 to I409, and I422 to V442.

The protein belongs to the amino acid/polyamine transporter 2 family. SdaC/TdcC subfamily.

It localises to the cell inner membrane. The catalysed reaction is L-threonine(in) + H(+)(in) = L-threonine(out) + H(+)(out). It carries out the reaction L-serine(in) + H(+)(in) = L-serine(out) + H(+)(out). Involved in the import of threonine and serine into the cell, with the concomitant import of a proton (symport system). The sequence is that of Threonine/serine transporter TdcC from Escherichia fergusonii (strain ATCC 35469 / DSM 13698 / CCUG 18766 / IAM 14443 / JCM 21226 / LMG 7866 / NBRC 102419 / NCTC 12128 / CDC 0568-73).